Consider the following 194-residue polypeptide: Large ribosomal subunit protein uL5 (194 aa).

It belongs to the universal ribosomal protein uL5 family. Part of the 50S ribosomal subunit; part of the 5S rRNA/L5/L18/L25 subcomplex. Contacts the 5S rRNA and the P site tRNA. Forms a bridge to the 30S subunit in the 70S ribosome.

This is one of the proteins that bind and probably mediate the attachment of the 5S RNA into the large ribosomal subunit, where it forms part of the central protuberance. In the 70S ribosome it contacts protein S13 of the 30S subunit (bridge B1b), connecting the 2 subunits; this bridge is implicated in subunit movement. Contacts the P site tRNA; the 5S rRNA and some of its associated proteins might help stabilize positioning of ribosome-bound tRNAs. The chain is Large ribosomal subunit protein uL5 from Chlorobium luteolum (strain DSM 273 / BCRC 81028 / 2530) (Pelodictyon luteolum).